Reading from the N-terminus, the 721-residue chain is BBSome complex member BBS2 (721 aa).

The stretch at 325 to 369 (RGNLMDTSAEQDLIRELSQKKQNLLLELRNYEENAKAELASPLNE) forms a coiled coil.

As to quaternary structure, part of BBSome complex, that contains BBS1, BBS2, BBS4, BBS5, BBS7, BBS8/TTC8, BBS9 and BBIP10. Interacts (via C-terminus) with BBS7. Interacts (via coiled coil domain) with MKKS. Interacts with CCDC28B and ALDOB. Interacts with DLEC1. Widely expressed.

The protein localises to the cell projection. The protein resides in the cilium membrane. It is found in the cytoplasm. It localises to the cytoskeleton. Its subcellular location is the microtubule organizing center. The protein localises to the centrosome. The protein resides in the centriolar satellite. Functionally, the BBSome complex is thought to function as a coat complex required for sorting of specific membrane proteins to the primary cilia. The BBSome complex is required for ciliogenesis but is dispensable for centriolar satellite function. This ciliogenic function is mediated in part by the Rab8 GDP/GTP exchange factor, which localizes to the basal body and contacts the BBSome. Rab8(GTP) enters the primary cilium and promotes extension of the ciliary membrane. Firstly the BBSome associates with the ciliary membrane and binds to RAB3IP/Rabin8, the guanosyl exchange factor (GEF) for Rab8 and then the Rab8-GTP localizes to the cilium and promotes docking and fusion of carrier vesicles to the base of the ciliary membrane. The BBSome complex, together with the LTZL1, controls SMO ciliary trafficking and contributes to the sonic hedgehog (SHH) pathway regulation. Required for proper BBSome complex assembly and its ciliary localization. This Homo sapiens (Human) protein is BBSome complex member BBS2.